The primary structure comprises 363 residues: MWKKVLIAIVFITSFSFAAEVKIRDEVYVEGFRPNYLTGYGIVVGLNGTGDGTTSRYTLISIANMLRKLGIYIDPAQVRTKNAAAVMVTANLPPFAKPGMAIDVQVASIGDAKDIVNGLLIRTPLYGPDGKIYAFAQGPVSTGGGFLESNKGGKVQKGFPTAGIIPNGAIVEEELPFDFNSMTEVTLSLKNPSFSKAQEIVNVINQKYPGLAVVQDPTSIKVRLPQTKNKTEFLAEILDLKIKTDKDNIPTIVFYEKTGTVIMSGDVAIDTPVYVSHGSIYVTVEKTPVISQPPPLSGGQTVVTEGVTTKVQEEKGRIISIESAKLSDLVKALNDLGVSPYDLIAILQAIKAAGKLHAEIKVM.

The N-terminal stretch at 1-18 (MWKKVLIAIVFITSFSFA) is a signal peptide.

This sequence belongs to the FlgI family. As to quaternary structure, the basal body constitutes a major portion of the flagellar organelle and consists of four rings (L,P,S, and M) mounted on a central rod.

It is found in the periplasm. The protein resides in the bacterial flagellum basal body. Its function is as follows. Assembles around the rod to form the L-ring and probably protects the motor/basal body from shearing forces during rotation. The polypeptide is Flagellar P-ring protein (Sulfurihydrogenibium sp. (strain YO3AOP1)).